A 474-amino-acid polypeptide reads, in one-letter code: Fumarate hydratase class II (474 aa).

Substrate contacts are provided by residues 104-106, 128-131, 138-140, and Thr186; these read SGT, HPND, and SSN. His187 (proton donor/acceptor) is an active-site residue. The active site involves Ser318. Residues Ser319 and 324–326 each bind substrate; that span reads KVN.

This sequence belongs to the class-II fumarase/aspartase family. Fumarase subfamily. As to quaternary structure, homotetramer.

The protein resides in the cytoplasm. The enzyme catalyses (S)-malate = fumarate + H2O. Its pathway is carbohydrate metabolism; tricarboxylic acid cycle; (S)-malate from fumarate: step 1/1. Functionally, involved in the TCA cycle. Catalyzes the stereospecific interconversion of fumarate to L-malate. This Mycobacterium bovis (strain ATCC BAA-935 / AF2122/97) protein is Fumarate hydratase class II.